Here is a 1357-residue protein sequence, read N- to C-terminus: DNA-directed RNA polymerase subunit beta (1357 aa).

The protein belongs to the RNA polymerase beta chain family. As to quaternary structure, the RNAP catalytic core consists of 2 alpha, 1 beta, 1 beta' and 1 omega subunit. When a sigma factor is associated with the core the holoenzyme is formed, which can initiate transcription.

The enzyme catalyses RNA(n) + a ribonucleoside 5'-triphosphate = RNA(n+1) + diphosphate. Functionally, DNA-dependent RNA polymerase catalyzes the transcription of DNA into RNA using the four ribonucleoside triphosphates as substrates. The chain is DNA-directed RNA polymerase subunit beta from Pseudomonas entomophila (strain L48).